Here is a 651-residue protein sequence, read N- to C-terminus: Macrolide export ATP-binding/permease protein MacB (651 aa).

The region spanning 2-239 (IEIVNVTKTY…PQMPQGGMEA (238 aa)) is the ABC transporter domain. Residue 38 to 45 (GASGSGKS) coordinates ATP. A run of 4 helical transmembrane segments spans residues 269 to 289 (FLSV…MALG), 532 to 552 (IAAI…LVSV), 589 to 609 (IIGI…AGWA), and 614 to 634 (MFSV…FGLW).

The protein belongs to the ABC transporter superfamily. Macrolide exporter (TC 3.A.1.122) family. Homodimer.

The protein resides in the cell inner membrane. Non-canonical ABC transporter that contains transmembrane domains (TMD), which form a pore in the inner membrane, and an ATP-binding domain (NBD), which is responsible for energy generation. Confers resistance against macrolides. This is Macrolide export ATP-binding/permease protein MacB from Chlorobaculum tepidum (strain ATCC 49652 / DSM 12025 / NBRC 103806 / TLS) (Chlorobium tepidum).